Reading from the N-terminus, the 122-residue chain is WUSCHEL-related homeobox 7 (122 aa).

Positions 25 to 89 (AKCGRWNPTV…NHKARERQKC (65 aa)) form a DNA-binding region, homeobox; WUS-type. The segment covering 98-111 (DHRQDTDLSKPRRD) has biased composition (basic and acidic residues). The segment at 98 to 122 (DHRQDTDLSKPRRDNVRRHQLPAKG) is disordered. Basic residues predominate over residues 112–122 (NVRRHQLPAKG).

This sequence belongs to the WUS homeobox family.

It localises to the nucleus. In terms of biological role, potential transcription factor that plays a central role during developmental processes. This Arabidopsis thaliana (Mouse-ear cress) protein is WUSCHEL-related homeobox 7 (WOX7).